The chain runs to 243 residues: Probable transcriptional regulatory protein BAV2207 (243 aa).

Residues 1 to 21 are disordered; sequence MAGHSKWANIQHRKGRQDAKR.

This sequence belongs to the TACO1 family.

The protein localises to the cytoplasm. In Bordetella avium (strain 197N), this protein is Probable transcriptional regulatory protein BAV2207.